The sequence spans 98 residues: UPF0235 protein MJ0618 (98 aa).

Belongs to the UPF0235 family.

In Methanocaldococcus jannaschii (strain ATCC 43067 / DSM 2661 / JAL-1 / JCM 10045 / NBRC 100440) (Methanococcus jannaschii), this protein is UPF0235 protein MJ0618.